Consider the following 828-residue polypeptide: Cadherin-22 (828 aa).

Residues 1-34 form the signal peptide; it reads MRPRPEGRGLRAGVALSPALLLLLLLPPPPTLLG. Residues 36 to 624 are Extracellular-facing; it reads LWAAGTPSPS…AFVMAASLSP (589 aa). Cadherin domains are found at residues 64 to 168, 169 to 277, 278 to 394, 395 to 498, and 499 to 616; these read WVWN…EPRF, LHGP…PPRF, PQKM…PPEF, RPPS…NPPE, and LATP…TTAF. N-linked (GlcNAc...) asparagine glycosylation is present at asparagine 162. 2 N-linked (GlcNAc...) asparagine glycosylation sites follow: asparagine 466 and asparagine 612. The chain crosses the membrane as a helical span at residues 625–645; that stretch reads GALIALLVCVLILVVLVLLIL. The Cytoplasmic segment spans residues 646-828; sequence TLRRHHKSHL…HRGDDEAQAS (183 aa). Residues 702 to 719 show a composition bias toward gly residues; it reads GGGSAGGGAGGGSGGGAG. The disordered stretch occupies residues 702 to 745; it reads GGGSAGGGAGGGSGGGAGSPPQAHLPSERHSLPQGPPSPEPDFS.

The protein resides in the cell membrane. Cadherins are calcium-dependent cell adhesion proteins. They preferentially interact with themselves in a homophilic manner in connecting cells; cadherins may thus contribute to the sorting of heterogeneous cell types. PB-cadherins may have a role in the morphological organization of pituitary gland and brain tissues. The polypeptide is Cadherin-22 (CDH22) (Homo sapiens (Human)).